A 154-amino-acid chain; its full sequence is Cathelicidin-2 (154 aa).

The signal sequence occupies residues 1–17; it reads MLSCWVLLLALLGGVCA. Residues 18-122 constitute a propeptide that is removed on maturation; it reads LPAPLSYPQA…RCRDASSDPV (105 aa). 2 cysteine pairs are disulfide-bonded: Cys75-Cys86 and Cys97-Cys114.

The protein belongs to the cathelicidin family. Detected in trachea, lung, proventriculus, duodenum, jejunum, ileum, caeca, colon, caecal tonsil, bursa of Fabricius, kidney, ovary, testis, thymus, liver, spleen, bone marrow, skin, uropygial gland, muscle and brain.

The protein localises to the secreted. Its function is as follows. Binds bacterial lipopolysaccharide (LPS). Has potent antimicrobial activity against Gram-positive and Gram-negative bacteria (in vitro). Has hemolytic activity (in vitro). May play a role in the innate immune response. This chain is Cathelicidin-2 (CATHL2), found in Gallus gallus (Chicken).